The sequence spans 896 residues: Zinc finger protein 574 (896 aa).

C2H2-type zinc fingers lie at residues 16–38 and 76–98; these read YVCS…QNSH and YQCL…QELH. Phosphoserine is present on Ser113. The segment at 126–148 adopts a C2H2-type 3 zinc-finger fold; it reads YECVDCKALFASQELWLNHRQTH. Phosphoserine is present on Ser164. The C2H2-type 4 zinc-finger motif lies at 214–236; it reads YKCSECSQLFQLPADFLEHQATH. Residues 239-301 are disordered; the sequence is APVPESQEPA…RARRNNSGEA (63 aa). Residues 247 to 257 are compositionally biased toward polar residues; that stretch reads PALQQEVQASS. Basic and acidic residues predominate over residues 274 to 287; sequence HSYELRNGEAIGRD. Phosphoserine is present on Ser298. C2H2-type zinc fingers lie at residues 309 to 331, 336 to 358, 364 to 386, and 392 to 413; these read LFCS…LRSH, FKCP…LGDH, FLCV…RRAH, and HSCP…RRTH. Residues 434 to 460 form a disordered region; the sequence is FPEPAPAETGEPEAPEPPVSEETSAGP. The segment at 466–489 adopts a C2H2-type 9 zinc-finger fold; sequence YRCLLCSREFGKALQLTRHQRFVH. The segment at 495–517 adopts a C2H2-type 10; degenerate zinc-finger fold; that stretch reads HKCSICGKMFKKKSHVRNHLRTH. 4 consecutive C2H2-type zinc fingers follow at residues 523 to 545, 551 to 573, 579 to 601, and 607 to 630; these read FPCP…RLTH, YRCG…RLVH, YRCQ…RYHH, and YKCR…LVVH. The C2H2-type 15; degenerate zinc-finger motif lies at 636 to 659; it reads HRCPSCGAAFPSSLRLREHRCAAA. Residues 667–689 form a C2H2-type 16 zinc finger; sequence FECGTCGKKVGSAARLQAHEAAH. The segment at 687–733 is disordered; that stretch reads AAHAAAGPGEVLAKEPPAPRAPRATRAPVASPAALGSTATASPAAPA. Positions 707 to 732 are enriched in low complexity; that stretch reads APRATRAPVASPAALGSTATASPAAP. Ser717 is subject to Phosphoserine. Position 724 is a phosphothreonine (Thr724). Ser728 carries the post-translational modification Phosphoserine. C2H2-type zinc fingers lie at residues 738–760, 766–788, 794–816, and 822–844; these read LECS…RRIH, YPCP…RRLH, FACE…RRIH, and YSCP…RKTH. Arg832 bears the Asymmetric dimethylarginine mark.

This sequence belongs to the krueppel C2H2-type zinc-finger protein family.

The protein resides in the nucleus. May be involved in transcriptional regulation. This is Zinc finger protein 574 (ZNF574) from Homo sapiens (Human).